Here is a 502-residue protein sequence, read N- to C-terminus: Neuronal acetylcholine receptor subunit alpha-7 (502 aa).

A signal peptide spans 1–22; the sequence is MCGRRGGIWLALAAALLHVSLQ. Over 23–233 the chain is Extracellular; it reads GEFQRRLYKE…VTMRRRTLYY (211 aa). Residues arginine 42 and valine 44 each contribute to the Ca(2+) site. Asparagine 46, asparagine 90, and asparagine 133 each carry an N-linked (GlcNAc...) asparagine glycan. Cysteine 150 and cysteine 164 are disulfide-bonded. Ca(2+)-binding residues include serine 172 and tyrosine 210. The cysteines at positions 212 and 213 are disulfide-linked. Helical transmembrane passes span 234–254, 262–282, and 295–315; these read GLNL…VFLL, ISLG…VAEI, and QYFA…VIVL. An essential for TMEM35A/NACHO-mediated proper subunit assembly and trafficking to cell membrane region spans residues 260-267; that stretch reads EKISLGIT. Topologically, residues 316–469 are cytoplasmic; sequence RYHHHDPDGG…WKFAACVVDR (154 aa). The chain crosses the membrane as a helical span at residues 470 to 490; it reads LCLMAFSVFTIICTIGILMSA.

It belongs to the ligand-gated ion channel (TC 1.A.9) family. Acetylcholine receptor (TC 1.A.9.1) subfamily. Alpha-7/CHRNA7 sub-subfamily. Homopentamer. Can also form heteropentamers with CHRNB2, mainly found in basal forebrain cholinergic neurons. Interacts with RIC3; which is required for proper folding and assembly. Interacts with LYPD6. Interacts with CANX. Glycosylations at Asn-46, Asn-90 and Asn-133 are essential for TMEM35A/NACHO-mediated proper subunit assembly and trafficking to the cell membrane. In terms of tissue distribution, higly expressed in brain. ALso expressed in immune cells sucha as macrophages.

Its subcellular location is the postsynaptic cell membrane. The protein resides in the cell membrane. The enzyme catalyses K(+)(in) = K(+)(out). It carries out the reaction Na(+)(in) = Na(+)(out). It catalyses the reaction Ca(2+)(in) = Ca(2+)(out). The catalysed reaction is choline(out) = choline(in). The enzyme catalyses NH4(+)(in) = NH4(+)(out). It carries out the reaction L-arginine(in) = L-arginine(out). It catalyses the reaction guanidine(out) = guanidine(in). Activated by a myriad of ligands such as acetylcholine, cytisine, nicotine, choline and epibatidine. Oligomeric amyloid-beta protein 42 activates specifially CHRNA7:CHRNB2 nAchRs. Activity is modulated by positive allosteric modulators (PAMs), such as flavonoids, with a wide range of chemical diversity, pharmacological sensitivity and efficacy. AChR activity is inhibited by the antagonists alpha-conotoxons RgIA, ImI and ImII, small disulfide-constrained peptides from cone snails. In terms of biological role, component of neuronal acetylcholine receptors (nAChRs) that function as pentameric, ligand-gated cation channels with high calcium permeability among other activities. nAChRs are excitatory neurotrasnmitter receptors formed by a collection of nAChR subunits known to mediate synaptic transmission in the nervous system and the neuromuscular junction. Each nAchR subunit confers differential attributes to channel properties, including activation, deactivation and desensitization kinetics, pH sensitivity, cation permeability, and binding to allosteric modulators. CHRNA7 forms homopentameric neuronal acetylcholine receptors abundantly expressed in the central nervous system, characterized by fast desensitization and high calcium permeability. Also forms heteropentamers with CHRNB2, mainly expressed in basal forebrain cholinergic neurons. Involved in the modulation of calcium-dependent signaling pathways and influences the release of neurotransmitters, including dopamine, glutamate and GABA. Involved in the modulation of calcium-dependent signaling pathways and influences the release of neurotransmitters, including dopamine, glutamate and GABA. Also expressed in non-neuronal cells such as immune cells like lymphocytes, monocytes and macrophages. In T cells, activation induces metabotropic signaling that results in an increase of intracellular Ca2+ concentrations, independent of ionotropic receptor functions. In macrophages, required for acetylcholine-mediated inhibition of TNF and other inflammatory cytokine release. Once activated by acetylcholine, nicotine or other agonists, selectively inhibits production of pro-inflammatory cytokines while leaving anti-inflammatory cytokines undisturbed. Stimulates the cholinergic anti-inflammatory pathway, controlling inflammation by inhibiting NFKB nuclear translocation and activating the JAK2-STAT3 pathway, independently of ion channel activity. Also expressed in the urothelium where it modulates reflex bladder activity by increasing intracellular calcium through internal stores and decreasing basal ATP release. This Mus musculus (Mouse) protein is Neuronal acetylcholine receptor subunit alpha-7 (Chrna7).